Consider the following 148-residue polypeptide: Large ribosomal subunit protein bL9 (148 aa).

The protein belongs to the bacterial ribosomal protein bL9 family.

Binds to the 23S rRNA. The chain is Large ribosomal subunit protein bL9 from Pseudomonas fluorescens (strain ATCC BAA-477 / NRRL B-23932 / Pf-5).